We begin with the raw amino-acid sequence, 36 residues long: FTDGLMKNGNFELAPKPEDMXGTVRVESLKAVKYXD.

N-glycosylated.

In Actinidia deliciosa (Kiwi), this protein is Allergen Act d 3.